Consider the following 473-residue polypeptide: Aspartyl/glutamyl-tRNA(Asn/Gln) amidotransferase subunit B (473 aa).

The protein belongs to the GatB/GatE family. GatB subfamily. Heterotrimer of A, B and C subunits.

The catalysed reaction is L-glutamyl-tRNA(Gln) + L-glutamine + ATP + H2O = L-glutaminyl-tRNA(Gln) + L-glutamate + ADP + phosphate + H(+). It carries out the reaction L-aspartyl-tRNA(Asn) + L-glutamine + ATP + H2O = L-asparaginyl-tRNA(Asn) + L-glutamate + ADP + phosphate + 2 H(+). Its function is as follows. Allows the formation of correctly charged Asn-tRNA(Asn) or Gln-tRNA(Gln) through the transamidation of misacylated Asp-tRNA(Asn) or Glu-tRNA(Gln) in organisms which lack either or both of asparaginyl-tRNA or glutaminyl-tRNA synthetases. The reaction takes place in the presence of glutamine and ATP through an activated phospho-Asp-tRNA(Asn) or phospho-Glu-tRNA(Gln). The sequence is that of Aspartyl/glutamyl-tRNA(Asn/Gln) amidotransferase subunit B from Francisella tularensis subsp. novicida (strain U112).